A 200-amino-acid chain; its full sequence is NADH-quinone oxidoreductase subunit C (200 aa).

This sequence belongs to the complex I 30 kDa subunit family. NDH-1 is composed of 14 different subunits. Subunits NuoB, C, D, E, F, and G constitute the peripheral sector of the complex.

Its subcellular location is the cell inner membrane. It carries out the reaction a quinone + NADH + 5 H(+)(in) = a quinol + NAD(+) + 4 H(+)(out). Functionally, NDH-1 shuttles electrons from NADH, via FMN and iron-sulfur (Fe-S) centers, to quinones in the respiratory chain. The immediate electron acceptor for the enzyme in this species is believed to be ubiquinone. Couples the redox reaction to proton translocation (for every two electrons transferred, four hydrogen ions are translocated across the cytoplasmic membrane), and thus conserves the redox energy in a proton gradient. This is NADH-quinone oxidoreductase subunit C from Agrobacterium fabrum (strain C58 / ATCC 33970) (Agrobacterium tumefaciens (strain C58)).